Consider the following 25-residue polypeptide: Small ribosomal subunit protein eS32 (25 aa).

The segment at 1-25 (MRAKWRKKRMRRLKRKRRKMRARSK) is disordered.

This sequence belongs to the eukaryotic ribosomal protein eS32 family. In terms of assembly, component of the small ribosomal subunit.

The polypeptide is Small ribosomal subunit protein eS32 (RpL41) (Spodoptera frugiperda (Fall armyworm)).